The chain runs to 430 residues: Serine--tRNA ligase (430 aa).

237-239 (TAE) contacts L-serine. 268-270 (RSE) serves as a coordination point for ATP. Residue E291 coordinates L-serine. ATP is bound at residue 355–358 (EISS). An L-serine-binding site is contributed by S391.

This sequence belongs to the class-II aminoacyl-tRNA synthetase family. Type-1 seryl-tRNA synthetase subfamily. Homodimer. The tRNA molecule binds across the dimer.

Its subcellular location is the cytoplasm. The enzyme catalyses tRNA(Ser) + L-serine + ATP = L-seryl-tRNA(Ser) + AMP + diphosphate + H(+). It carries out the reaction tRNA(Sec) + L-serine + ATP = L-seryl-tRNA(Sec) + AMP + diphosphate + H(+). It participates in aminoacyl-tRNA biosynthesis; selenocysteinyl-tRNA(Sec) biosynthesis; L-seryl-tRNA(Sec) from L-serine and tRNA(Sec): step 1/1. In terms of biological role, catalyzes the attachment of serine to tRNA(Ser). Is also able to aminoacylate tRNA(Sec) with serine, to form the misacylated tRNA L-seryl-tRNA(Sec), which will be further converted into selenocysteinyl-tRNA(Sec). This is Serine--tRNA ligase from Escherichia fergusonii (strain ATCC 35469 / DSM 13698 / CCUG 18766 / IAM 14443 / JCM 21226 / LMG 7866 / NBRC 102419 / NCTC 12128 / CDC 0568-73).